Here is a 992-residue protein sequence, read N- to C-terminus: RNA-binding motif protein, X-linked-like-3 (992 aa).

The RRM domain occupies 8–86 (EKLFVGGLNL…KAIMVAQTIK (79 aa)). 7 disordered regions span residues 91–130 (SSRWVPPTPGSGSRSRFSHRTRGGGSSPQRPPSQGRPDDG), 144–169 (APMPRKRGPPPRHCASPPHKRRDPGD), 188–207 (PDYCPXRGDGNRNGYRGRDH), 278–385 (DHLP…DSSS), 397–511 (EEYQ…HRYR), 562–588 (SLDANSGGRSPNAYSGGHDSSSRSHRY), and 644–992 (NSGG…QSRY). A compositionally biased stretch (low complexity) spans 284 to 296 (YSGGRSSSSNSYS). The span at 297–316 (RSDRYGEEGCYEEYRGRSPD) shows a compositional bias: basic and acidic residues. Over residues 318–334 (HSGGRNSSSNSYGQSHH) the composition is skewed to low complexity. Over residues 335-371 (YGGEGRYEEYRGRYEEYRGRSHEARSGGRSTDAHSGG) the composition is skewed to basic and acidic residues. Residues 454–471 (THSGGRSSSSNSYGQSHR) are compositionally biased toward low complexity. A compositionally biased stretch (basic and acidic residues) spans 472–488 (YGGEGHYEYRGRSHDAH). Polar residues-rich tracts occupy residues 564-574 (DANSGGRSPNA), 644-664 (NSGGCSPNAYSGGHDSSSQSH), and 752-774 (DANSGGRSPNAYSGGRDSSSNSY). Positions 785–798 (HYEEYRGRSHDTHS) are enriched in basic and acidic residues. The segment covering 818–828 (GRNSFSNSYGQ) has biased composition (polar residues). Basic and acidic residues-rich tracts occupy residues 831–842 (HYGRGGRYEEYQ), 920–948 (SGDHDRSSNSYGRSDRYSRGRDRVGRPDR), and 981–992 (GRFERGEGQSRY).

The chain is RNA-binding motif protein, X-linked-like-3 (RBMXL3) from Pan troglodytes (Chimpanzee).